The following is a 425-amino-acid chain: ATP-dependent RNA helicase eIF4A (425 aa).

The short motif at 38 to 66 is the Q motif element; that stretch reads DTWEDYGLKEDLLKGIYSIGFETPSFIQK. The Helicase ATP-binding domain occupies 69–241; that stretch reads IQPIIDGRDI…EEILINPVII (173 aa). 82–89 is a binding site for ATP; that stretch reads AQSGTGKT. The DEAD box motif lies at 187 to 190; it reads DEAD. Residues 252–425 enclose the Helicase C-terminal domain; sequence GIRQYFIDLR…KELPADFSFQ (174 aa).

It belongs to the DEAD box helicase family. eIF4A subfamily. Component of the eIF4F complex, which composition varies with external and internal environmental conditions. It is composed of at least eIF4A, eIF4E and eIF4G.

It is found in the cytoplasm. The catalysed reaction is ATP + H2O = ADP + phosphate + H(+). Its function is as follows. ATP-dependent RNA helicase which is a subunit of the eIF4F complex involved in cap recognition and is required for mRNA binding to ribosome. In the current model of translation initiation, eIF4A unwinds RNA secondary structures in the 5'-UTR of mRNAs which is necessary to allow efficient binding of the small ribosomal subunit, and subsequent scanning for the initiator codon. The sequence is that of ATP-dependent RNA helicase eIF4A (TIF1) from Encephalitozoon cuniculi (strain GB-M1) (Microsporidian parasite).